Here is a 274-residue protein sequence, read N- to C-terminus: Diaminopimelate epimerase (274 aa).

N11, Q44, and N64 together coordinate substrate. The active-site Proton donor is C73. Substrate contacts are provided by residues 74-75 (GN), N157, N190, and 208-209 (ER). C217 (proton acceptor) is an active-site residue. 218–219 (GS) contributes to the substrate binding site.

It belongs to the diaminopimelate epimerase family. Homodimer.

The protein localises to the cytoplasm. The enzyme catalyses (2S,6S)-2,6-diaminopimelate = meso-2,6-diaminopimelate. It functions in the pathway amino-acid biosynthesis; L-lysine biosynthesis via DAP pathway; DL-2,6-diaminopimelate from LL-2,6-diaminopimelate: step 1/1. Its function is as follows. Catalyzes the stereoinversion of LL-2,6-diaminopimelate (L,L-DAP) to meso-diaminopimelate (meso-DAP), a precursor of L-lysine and an essential component of the bacterial peptidoglycan. This is Diaminopimelate epimerase from Histophilus somni (strain 2336) (Haemophilus somnus).